A 176-amino-acid polypeptide reads, in one-letter code: Ribosome maturation factor RimM (176 aa).

Residues 97-176 (DSEFYHRDLI…QILVDWDPDF (80 aa)) form the PRC barrel domain.

It belongs to the RimM family. As to quaternary structure, binds ribosomal protein uS19.

Its subcellular location is the cytoplasm. Functionally, an accessory protein needed during the final step in the assembly of 30S ribosomal subunit, possibly for assembly of the head region. Essential for efficient processing of 16S rRNA. May be needed both before and after RbfA during the maturation of 16S rRNA. It has affinity for free ribosomal 30S subunits but not for 70S ribosomes. This Shewanella frigidimarina (strain NCIMB 400) protein is Ribosome maturation factor RimM.